We begin with the raw amino-acid sequence, 88 residues long: Small ribosomal subunit protein bS20 (88 aa).

Positions 1–22 (MANIKSSKKRSIQSEKKRKYNS) are enriched in basic residues. Residues 1-26 (MANIKSSKKRSIQSEKKRKYNSSKKS) form a disordered region.

Belongs to the bacterial ribosomal protein bS20 family.

Binds directly to 16S ribosomal RNA. This Wigglesworthia glossinidia brevipalpis protein is Small ribosomal subunit protein bS20.